Here is a 338-residue protein sequence, read N- to C-terminus: Tagatose 1,6-diphosphate aldolase (338 aa).

It belongs to the aldolase LacD family.

It carries out the reaction D-tagatofuranose 1,6-bisphosphate = D-glyceraldehyde 3-phosphate + dihydroxyacetone phosphate. Its pathway is carbohydrate metabolism; D-tagatose 6-phosphate degradation; D-glyceraldehyde 3-phosphate and glycerone phosphate from D-tagatose 6-phosphate: step 2/2. The chain is Tagatose 1,6-diphosphate aldolase from Listeria monocytogenes serotype 4a (strain HCC23).